Reading from the N-terminus, the 732-residue chain is E3 ubiquitin-protein ligase RNF19B (732 aa).

Residues 1-109 (MGSEKDSESP…PEEDEAAEGG (109 aa)) form a disordered region. The interval 1–315 (MGSEKDSESP…VCGCEFCWLC (315 aa)) is required for ubiquitin ligase activity and for protection against staurosporin-induced cell death. Positions 54–71 (AEPPPPAAPPPPPPPAPA) are enriched in pro residues. The span at 72–99 (PVEAQAPPVEALPSEPAAEAEAEAVAAG) shows a compositional bias: low complexity. Over residues 100-109 (PEEDEAAEGG) the composition is skewed to acidic residues. Positions 112–334 (EEVECPLCLV…LSPSGCTFWG (223 aa)) are TRIAD supradomain. Residues cysteine 116, cysteine 119, cysteine 139, cysteine 142, cysteine 203, cysteine 208, cysteine 225, cysteine 230, cysteine 235, cysteine 238, histidine 243, cysteine 248, cysteine 284, and cysteine 287 each contribute to the Zn(2+) site. The segment at 116-165 (CPLCLVRLPPERAPRLLSCPHRSCRDCLRHYLRLEISESRVPISCPECSE) adopts an RING-type 1 zinc-finger fold. Residues 183–248 (HKYEEFMLRR…KQIWHPNQTC (66 aa)) form an IBR-type zinc finger. The RING-type 2; atypical zinc finger occupies 284–315 (CPRCSAYIIKMNDGSCNHMTCAVCGCEFCWLC). Cysteine 299 is a catalytic residue. Positions 304, 307, 312, 315, 323, and 330 each coordinate Zn(2+). The next 2 helical transmembrane spans lie at 351–371 (LIGA…AMVI) and 412–432 (VIAA…VYGV). Disordered stretches follow at residues 598-644 (QLVS…QSCE) and 660-732 (QPES…YEVE). Residues 674-683 (QSDDVPDITS) show a composition bias toward acidic residues.

The protein belongs to the RBR family. RNF19 subfamily. As to quaternary structure, interacts with UBE2L3, UBE2L6 and UCKL1. As to expression, expressed specifically in natural killer cells, activated macrophages and cytotoxic T-cells. Present in macrophages (at protein level). Ubiquitously expressed with high expression in testis.

Its subcellular location is the cytoplasmic granule membrane. It localises to the endoplasmic reticulum membrane. The catalysed reaction is [E2 ubiquitin-conjugating enzyme]-S-ubiquitinyl-L-cysteine + [acceptor protein]-L-lysine = [E2 ubiquitin-conjugating enzyme]-L-cysteine + [acceptor protein]-N(6)-ubiquitinyl-L-lysine.. The protein operates within protein modification; protein ubiquitination. In terms of biological role, E3 ubiquitin-protein ligase which accepts ubiquitin from E2 ubiquitin-conjugating enzymes UBE2L3 and UBE2L6 in the form of a thioester and then directly transfers the ubiquitin to targeted substrates, such as UCKL1. Involved in the cytolytic activity of natural killer cells and cytotoxic T-cells. Protects against staurosporin-induced cell death. In Mus musculus (Mouse), this protein is E3 ubiquitin-protein ligase RNF19B (Rnf19b).